The sequence spans 261 residues: Cytochrome c oxidase subunit 3 (261 aa).

The Mitochondrial matrix portion of the chain corresponds to 1–15; it reads MTHQTHACHMVNPSP. Residues 16–34 traverse the membrane as a helical segment; sequence WPLTGALSGLLMTSGLIMW. At 35–40 the chain is on the mitochondrial intermembrane side; the sequence is FHFNST. A helical transmembrane segment spans residues 41 to 66; it reads TLLMLGLTTNMLTMYQWWRDVIREST. The Mitochondrial matrix segment spans residues 67–72; sequence FQGHHT. A helical membrane pass occupies residues 73-105; it reads PNVQKGLRYGMILFIISEVLFFTGFFWAFYHSS. The Mitochondrial intermembrane segment spans residues 106 to 128; the sequence is LAPTPELGGCWPPTGIHPLNPLE. Residues 129–152 form a helical membrane-spanning segment; it reads VPLLNTSVLLASGVSITWAHHSLM. The Mitochondrial matrix segment spans residues 153-155; the sequence is EGN. Residues 156–183 form a helical membrane-spanning segment; sequence RNHMLQALFITIALGVYFTLLQASEYYE. The Mitochondrial intermembrane segment spans residues 184 to 190; sequence APFTISD. A helical transmembrane segment spans residues 191 to 223; sequence GVYGSTFFVATGFHGLHVIIGSTFLIVCFFRQL. Over 224-232 the chain is Mitochondrial matrix; sequence KFHFTSSHH. Residues 233–256 form a helical membrane-spanning segment; sequence FGFEAAAWYWHFVDVVWLFLYVSI. Over 257–261 the chain is Mitochondrial intermembrane; that stretch reads YWWGS.

This sequence belongs to the cytochrome c oxidase subunit 3 family. In terms of assembly, component of the cytochrome c oxidase (complex IV, CIV), a multisubunit enzyme composed of 14 subunits. The complex is composed of a catalytic core of 3 subunits MT-CO1, MT-CO2 and MT-CO3, encoded in the mitochondrial DNA, and 11 supernumerary subunits COX4I, COX5A, COX5B, COX6A, COX6B, COX6C, COX7A, COX7B, COX7C, COX8 and NDUFA4, which are encoded in the nuclear genome. The complex exists as a monomer or a dimer and forms supercomplexes (SCs) in the inner mitochondrial membrane with NADH-ubiquinone oxidoreductase (complex I, CI) and ubiquinol-cytochrome c oxidoreductase (cytochrome b-c1 complex, complex III, CIII), resulting in different assemblies (supercomplex SCI(1)III(2)IV(1) and megacomplex MCI(2)III(2)IV(2)).

The protein localises to the mitochondrion inner membrane. It carries out the reaction 4 Fe(II)-[cytochrome c] + O2 + 8 H(+)(in) = 4 Fe(III)-[cytochrome c] + 2 H2O + 4 H(+)(out). Functionally, component of the cytochrome c oxidase, the last enzyme in the mitochondrial electron transport chain which drives oxidative phosphorylation. The respiratory chain contains 3 multisubunit complexes succinate dehydrogenase (complex II, CII), ubiquinol-cytochrome c oxidoreductase (cytochrome b-c1 complex, complex III, CIII) and cytochrome c oxidase (complex IV, CIV), that cooperate to transfer electrons derived from NADH and succinate to molecular oxygen, creating an electrochemical gradient over the inner membrane that drives transmembrane transport and the ATP synthase. Cytochrome c oxidase is the component of the respiratory chain that catalyzes the reduction of oxygen to water. Electrons originating from reduced cytochrome c in the intermembrane space (IMS) are transferred via the dinuclear copper A center (CU(A)) of subunit 2 and heme A of subunit 1 to the active site in subunit 1, a binuclear center (BNC) formed by heme A3 and copper B (CU(B)). The BNC reduces molecular oxygen to 2 water molecules using 4 electrons from cytochrome c in the IMS and 4 protons from the mitochondrial matrix. The protein is Cytochrome c oxidase subunit 3 (MT-CO3) of Gazella saudiya (Saudi gazelle).